Reading from the N-terminus, the 45-residue chain is Thymosin beta-15A (45 aa).

2 stretches are compositionally biased toward basic and acidic residues: residues 1-27 and 35-45; these read MSDK…EEKN and IQQEKECVQTS. Residues 1–45 are disordered; that stretch reads MSDKPDLSEVEKFDRSKLKKTNTEEKNTLPSKETIQQEKECVQTS.

This sequence belongs to the thymosin beta family. Neuroblastoma-specific.

It is found in the cytoplasm. The protein localises to the cytoskeleton. In terms of biological role, plays an important role in the organization of the cytoskeleton. Binds to and sequesters actin monomers (G actin) and therefore inhibits actin polymerization. In Homo sapiens (Human), this protein is Thymosin beta-15A (TMSB15A).